Here is a 226-residue protein sequence, read N- to C-terminus: Thiocyanate methyltransferase 1 (226 aa).

Residues W35, W39, W46, and G73 each coordinate S-adenosyl-L-methionine. S85 bears the Phosphoserine mark. S-adenosyl-L-methionine-binding positions include D94, 122–123 (DF), and Y138.

This sequence belongs to the class I-like SAM-binding methyltransferase superfamily. TPMT family. As to expression, ubiquitous.

It catalyses the reaction thiocyanate + S-adenosyl-L-methionine = methyl thiocyanate + S-adenosyl-L-homocysteine. Its function is as follows. S-adenosyl-L-methionine-dependent methyltransferase. Probably involved in glucosinolate metabolism and defense against phytopathogens. Highly reactive to thiocyanate (NCS(-)) derived from myrosinase-mediated hydrolysis of glucosinolates upon tissue damage. Also accepts halid ions as substrates with a lower affinity. The polypeptide is Thiocyanate methyltransferase 1 (TMT1) (Brassica oleracea (Wild cabbage)).